We begin with the raw amino-acid sequence, 468 residues long: Uronate isomerase (468 aa).

This sequence belongs to the metallo-dependent hydrolases superfamily. Uronate isomerase family.

It catalyses the reaction D-glucuronate = D-fructuronate. The enzyme catalyses aldehydo-D-galacturonate = keto-D-tagaturonate. It participates in carbohydrate metabolism; pentose and glucuronate interconversion. The protein is Uronate isomerase of Phocaeicola vulgatus (strain ATCC 8482 / DSM 1447 / JCM 5826 / CCUG 4940 / NBRC 14291 / NCTC 11154) (Bacteroides vulgatus).